A 130-amino-acid polypeptide reads, in one-letter code: Small ribosomal subunit protein uS8 (130 aa).

It belongs to the universal ribosomal protein uS8 family. As to quaternary structure, part of the 30S ribosomal subunit. Contacts proteins S5 and S12.

Functionally, one of the primary rRNA binding proteins, it binds directly to 16S rRNA central domain where it helps coordinate assembly of the platform of the 30S subunit. This chain is Small ribosomal subunit protein uS8, found in Pseudomonas syringae pv. tomato (strain ATCC BAA-871 / DC3000).